We begin with the raw amino-acid sequence, 209 residues long: Small ribosomal subunit protein uS4 (209 aa).

One can recognise an S4 RNA-binding domain in the interval 98-164 (SRLDNVVYRG…TPFIVARETA (67 aa)).

Belongs to the universal ribosomal protein uS4 family. In terms of assembly, part of the 30S ribosomal subunit. Contacts protein S5. The interaction surface between S4 and S5 is involved in control of translational fidelity.

Its function is as follows. One of the primary rRNA binding proteins, it binds directly to 16S rRNA where it nucleates assembly of the body of the 30S subunit. With S5 and S12 plays an important role in translational accuracy. This chain is Small ribosomal subunit protein uS4, found in Frankia alni (strain DSM 45986 / CECT 9034 / ACN14a).